A 513-amino-acid polypeptide reads, in one-letter code: MSFIKSLLLAAAAVASVSARRGPEPKYPPAAGTSSYCSYWVDYEGDKSCSRVLEDNVVVLKDFARWNPTVGADCSGIKAGNSYCVEAFGEPEPIEVTTTTRAATTTTQPTATTTTFANGIATPQPTQSGMVTNCNKFHWIAEGVSCSQVISFQKITLADFVKWNPSVKSDCSGMWAGVNVCVGVVGSSTDTAKPTTTAPSNGVVTPQPTQPSMVTNCNKFHWIAKGVTCQQVISYQKISLADFVKWNPSVLSDCSGMWAEVQVCVGVIGSTPTTLATTTTTAGNGVSTPLPTQPGMVTNCAKFHWVAKGVTCNQIYSFQKITLEQFVSYNPTVKSDCSGMQAEVQVCVGLIAGTTPTTTRPPTTTAPGNGVSTPQPTQPGMVTNCAKFHWVAKGVTCNQIYSFQKITLEQFVSFNPTVKSDCTGMQAEVNVCVGLIGGNPTPTQTGNGIATPTPIQPGMVSNCKKFHWIAQGVTCQQVISFQKITLADFVKWNTGVGSDCRTMWAETNVCVGV.

Positions 1 to 19 (MSFIKSLLLAAAAVASVSA) are cleaved as a signal peptide. LysM domains lie at 38–85 (SYWV…SYCV), 136–182 (KFHW…NVCV), 219–265 (KFHW…QVCV), and 302–348 (KFHW…QVCV). The segment covering 357–367 (TTTRPPTTTAP) has biased composition (low complexity). The tract at residues 357–377 (TTTRPPTTTAPGNGVSTPQPT) is disordered. 2 LysM domains span residues 387–433 (KFHW…NVCV) and 465–511 (KFHW…NVCV).

Belongs to the secreted LysM effector family.

Functionally, might have a role in sequestration of chitin oligosaccharides (breakdown products of fungal cell walls that are released during invasion and act as triggers of host immunity) to dampen host defense. Does not play an important role during host colonization. This chain is Secreted LysM effector Vd6LysM, found in Verticillium dahliae (strain VdLs.17 / ATCC MYA-4575 / FGSC 10137) (Verticillium wilt).